A 1314-amino-acid chain; its full sequence is Condensin-2 complex subunit CAP-D3 (1314 aa).

HEAT repeat units lie at residues 20–58 (ESDY…SFLR), 98–136 (PIAF…KKRG), 184–222 (KSLV…GVLN), 231–267 (TAAE…SLAK), 269–310 (NPEL…AMEV), 331–360 (RVLA…GLKD), 361–398 (SWGL…FLSG), 417–455 (SEGK…LMGG), 457–493 (FDGS…ICTD), and 494–532 (EIVT…ERIL). The disordered stretch occupies residues 116-150 (DDSAGQGSNSQREKGNKKKRGRGKRNLGYEDGEET). A compositionally biased stretch (basic residues) spans 130 to 140 (GNKKKRGRGKR). Positions 789-796 (SRRSKRLD) match the Nuclear localization signal motif. 6 HEAT repeats span residues 821-859 (SADT…KQKA), 878-916 (GKLA…VHYT), 917-954 (AMIE…RDYV), 956-992 (WRGV…VKAP), 1053-1091 (QMAP…SVLQ), and 1138-1179 (KGLI…DYKN). Disordered stretches follow at residues 1210-1237 (MANQ…ENVR) and 1265-1314 (VNGG…DDES).

As to quaternary structure, component of the condensin-2 complex. Present in buds.

It is found in the nucleus. The protein resides in the chromosome. Functionally, regulatory subunit of the condensin-2 complex, a complex which establishes mitotic chromosome architecture and is involved in physical rigidity of the chromatid axis. May promote the resolution of double-strand DNA catenanes (intertwines) between sister chromatids. Required for plant vigor, fertility, chromatin condensation and sister chromatid cohesion both during mitosis and meiosis. Necessary to maintain normal structural integrity of the meiotic chromosomes during the two nuclear divisions of gametogenesis, especially to prevent interchromosome connections at metaphase I. Seems also involved in crossover formation during meiotic prophase I. Prevents centromeric and pericentromeric heterochromatin repeats association. This is Condensin-2 complex subunit CAP-D3 from Arabidopsis thaliana (Mouse-ear cress).